The primary structure comprises 375 residues: Actin, cytoplasmic (375 aa).

The protein belongs to the actin family.

Its subcellular location is the cytoplasm. It is found in the cytoskeleton. It carries out the reaction ATP + H2O = ADP + phosphate + H(+). Actins are highly conserved proteins that are involved in various types of cell motility and are ubiquitously expressed in all eukaryotic cells. The sequence is that of Actin, cytoplasmic from Sterkiella nova (Ciliate).